The following is an 825-amino-acid chain: Probable phosphoketolase (825 aa).

Belongs to the XFP family. Thiamine diphosphate is required as a cofactor.

This Bifidobacterium animalis subsp. lactis (strain AD011) protein is Probable phosphoketolase.